Reading from the N-terminus, the 613-residue chain is UvrABC system protein C (613 aa).

Residues 29-107 (DVAGVYKMLG…IKTLKPKYNI (79 aa)) enclose the GIY-YIG domain. Residues 217 to 252 (KELQRELFDSMRKFSDNLDYESAMVYRDRLQALKSI) form the UVR domain.

It belongs to the UvrC family. As to quaternary structure, interacts with UvrB in an incision complex.

The protein resides in the cytoplasm. The UvrABC repair system catalyzes the recognition and processing of DNA lesions. UvrC both incises the 5' and 3' sides of the lesion. The N-terminal half is responsible for the 3' incision and the C-terminal half is responsible for the 5' incision. The sequence is that of UvrABC system protein C from Anaplasma marginale (strain St. Maries).